Consider the following 322-residue polypeptide: 26S proteasome non-ATPase regulatory subunit 7 (322 aa).

The MPN domain maps to 9–144 (VVVHPLVLLS…TEAYISVEEV (136 aa)). Residue lysine 180 forms a Glycyl lysine isopeptide (Lys-Gly) (interchain with G-Cter in ubiquitin) linkage. Residues lysine 204, lysine 214, lysine 314, and lysine 315 each carry the N6-acetyllysine modification. The interval 281 to 322 (ANRDAEKKEGQEKEDSKKDRKDDKEKEKEKSDVKKEEKKEKK) is disordered.

Belongs to the peptidase M67A family. In terms of assembly, component of the 19S proteasome regulatory particle complex. The 26S proteasome consists of a 20S core particle (CP) and two 19S regulatory subunits (RP). The regulatory particle is made of a lid composed of 9 subunits including PSMD7, a base containing 6 ATPases and few additional components. Within the complex, PSMD7 interacts with subunit PSMD4 through their respective MPN domain. Interacts with TRIM5.

In terms of biological role, component of the 26S proteasome, a multiprotein complex involved in the ATP-dependent degradation of ubiquitinated proteins. This complex plays a key role in the maintenance of protein homeostasis by removing misfolded or damaged proteins, which could impair cellular functions, and by removing proteins whose functions are no longer required. Therefore, the proteasome participates in numerous cellular processes, including cell cycle progression, apoptosis, or DNA damage repair. The sequence is that of 26S proteasome non-ATPase regulatory subunit 7 (PSMD7) from Bos taurus (Bovine).